We begin with the raw amino-acid sequence, 699 residues long: Zinc finger protein 782 (699 aa).

The region spanning 8-79 (VSFQDVTVEF…EKEKGFLSRN (72 aa)) is the KRAB domain. A disordered region spans residues 75-95 (FLSRNSPEDSQPDEISEKSPE). Residues 279–307 (CFCRITHKTLTGGKSFSQKSHIREHHRVH) form a C2H2-type 1; degenerate zinc finger. The C2H2-type 2; degenerate zinc-finger motif lies at 316-332 (GKSFNRNSTLPVHQRTH). The segment at 337 to 360 (YSDYHPCTETFSYQSTFSVHQKVH) adopts a C2H2-type 3; degenerate zinc-finger fold. The C2H2-type 4; degenerate zinc-finger motif lies at 366–388 (YEYNECGKSCSMNSHLIWPQKSH). 11 C2H2-type zinc fingers span residues 394–416 (YECP…QRTH), 422–444 (YKCD…QRTH), 450–472 (FECH…QRTH), 478–500 (FECN…RRTH), 506–528 (YKCD…HRTH), 534–556 (YKCN…HRIH), 562–584 (YKCN…HRTH), 590–612 (YQCE…QRTH), 618–640 (YECN…QRTH), 646–668 (YNCN…QRTH), and 674–696 (YKCD…QKAH).

It belongs to the krueppel C2H2-type zinc-finger protein family.

Its subcellular location is the nucleus. In terms of biological role, may be involved in transcriptional regulation. In Homo sapiens (Human), this protein is Zinc finger protein 782 (ZNF782).